Consider the following 383-residue polypeptide: MSHLRRRRFKLSLCALPVSIDRLLNFPAEKQMSVNDSIDPRFVFHVEDESLRFRVGDSGTKIRELETVGDRHFRTQQGFCGNRIEKDETMYSDGDDEEYDVSIRRRTALIQPGIDSGNNYDSAAAEETNRESKNPVGWELVVREDGEGNSTIDRHEMEFKVRITKPDGNVSNSHRNTQQKRDFASVEKERVTTTSVSSWESLKAILSDPVTGALMNDATILPCGHSFGAGGLKEVKKMKACFTCSQPTLEGSEKPNLSLRIVVHAFRQEEDSDHIHTLKRRKERSDQKRSFCIPNITETPKSSRGIQFPFSIGDHIIIEGNKRTPPRFVGRIAVIMTQCLNGWYVVKTVDNSESIKLQHCSLAKISDNSSTKVTVAEMPPSWL.

Positions Pro-166–Val-186 are disordered. Positions Ser-201–Asp-273 constitute a U-box domain.

It carries out the reaction S-ubiquitinyl-[E2 ubiquitin-conjugating enzyme]-L-cysteine + [acceptor protein]-L-lysine = [E2 ubiquitin-conjugating enzyme]-L-cysteine + N(6)-ubiquitinyl-[acceptor protein]-L-lysine.. Its pathway is protein modification; protein ubiquitination. Functionally, functions as an E3 ubiquitin ligase. The protein is U-box domain-containing protein 63 (PUB63) of Arabidopsis thaliana (Mouse-ear cress).